We begin with the raw amino-acid sequence, 298 residues long: Glycine--tRNA ligase alpha subunit (298 aa).

This sequence belongs to the class-II aminoacyl-tRNA synthetase family. As to quaternary structure, tetramer of two alpha and two beta subunits.

It localises to the cytoplasm. The catalysed reaction is tRNA(Gly) + glycine + ATP = glycyl-tRNA(Gly) + AMP + diphosphate. This Lacticaseibacillus paracasei (strain ATCC 334 / BCRC 17002 / CCUG 31169 / CIP 107868 / KCTC 3260 / NRRL B-441) (Lactobacillus paracasei) protein is Glycine--tRNA ligase alpha subunit.